Here is a 417-residue protein sequence, read N- to C-terminus: Serine hydroxymethyltransferase (417 aa).

(6S)-5,6,7,8-tetrahydrofolate contacts are provided by residues Leu-121 and 125-127 (GHL). At Lys-229 the chain carries N6-(pyridoxal phosphate)lysine. 355–357 (SPF) is a (6S)-5,6,7,8-tetrahydrofolate binding site.

The protein belongs to the SHMT family. As to quaternary structure, homodimer. Requires pyridoxal 5'-phosphate as cofactor.

Its subcellular location is the cytoplasm. The catalysed reaction is (6R)-5,10-methylene-5,6,7,8-tetrahydrofolate + glycine + H2O = (6S)-5,6,7,8-tetrahydrofolate + L-serine. It participates in one-carbon metabolism; tetrahydrofolate interconversion. Its pathway is amino-acid biosynthesis; glycine biosynthesis; glycine from L-serine: step 1/1. Catalyzes the reversible interconversion of serine and glycine with tetrahydrofolate (THF) serving as the one-carbon carrier. This reaction serves as the major source of one-carbon groups required for the biosynthesis of purines, thymidylate, methionine, and other important biomolecules. Also exhibits THF-independent aldolase activity toward beta-hydroxyamino acids, producing glycine and aldehydes, via a retro-aldol mechanism. In Stenotrophomonas maltophilia (strain R551-3), this protein is Serine hydroxymethyltransferase.